Here is an 89-residue protein sequence, read N- to C-terminus: Small ribosomal subunit protein uS15 (89 aa).

It belongs to the universal ribosomal protein uS15 family. In terms of assembly, part of the 30S ribosomal subunit. Forms a bridge to the 50S subunit in the 70S ribosome, contacting the 23S rRNA.

Functionally, one of the primary rRNA binding proteins, it binds directly to 16S rRNA where it helps nucleate assembly of the platform of the 30S subunit by binding and bridging several RNA helices of the 16S rRNA. In terms of biological role, forms an intersubunit bridge (bridge B4) with the 23S rRNA of the 50S subunit in the ribosome. This chain is Small ribosomal subunit protein uS15, found in Corynebacterium kroppenstedtii (strain DSM 44385 / JCM 11950 / CIP 105744 / CCUG 35717).